A 323-amino-acid chain; its full sequence is Formyl peptide receptor-related sequence 4 (323 aa).

The Extracellular portion of the chain corresponds to 1–29 (MEVNISMPLNGSEVVFYDSTTSRVLWILS). 2 N-linked (GlcNAc...) asparagine glycosylation sites follow: Asn-4 and Asn-10. A helical transmembrane segment spans residues 30–50 (LVVLFITFVLGVLGNGLVIWV). The Cytoplasmic portion of the chain corresponds to 51–66 (AGFQMAHTVTTVSYLN). Residues 67–87 (LALSDLSFMATLPLHIISMVM) form a helical membrane-spanning segment. Residues 88–99 (RGKWLFGWFLCK) are Extracellular-facing. Cys-98 and Cys-176 are disulfide-bonded. A helical transmembrane segment spans residues 100–120 (LVHIIANINLFVSIFLITLIA). The Cytoplasmic portion of the chain corresponds to 121-144 (MDRCICVLCPVWSQNHRTVSLARK). The helical transmembrane segment at 145 to 165 (VVLGAWIFALLLTLPHFLFLT) threads the bilayer. The Extracellular portion of the chain corresponds to 166–202 (TVRDARGDVYCISKFESWVATSEEQLKVSVIAATASG). A helical membrane pass occupies residues 203-223 (IINFIIGFSMPMSFIAICYGL). The Cytoplasmic segment spans residues 224–241 (MAAKICRRGFVNSSRPLR). A helical transmembrane segment spans residues 242–262 (VLTAVAVSFFVCWFPFQLIML). Residues 263–280 (LGNIFNNETLSIIHMLVN) are Extracellular-facing. The N-linked (GlcNAc...) asparagine glycan is linked to Asn-269. A helical transmembrane segment spans residues 281-301 (PANTLASFNSCLNPILYVFLG). Residues 302–323 (QEFRDRLIYSLYASLERALRED) lie on the Cytoplasmic side of the membrane.

It belongs to the G-protein coupled receptor 1 family. In terms of tissue distribution, expressed in 0.6 % of a subset of sensory neurons located in the apical layer of the vomeronasal organ. Each neuron appears to express only one receptor gene.

Its subcellular location is the cell membrane. Functionally, may have an olfactory function associated with the identification of pathogens or of pathogenic states. This Mus musculus (Mouse) protein is Formyl peptide receptor-related sequence 4 (Fpr-rs4).